Reading from the N-terminus, the 128-residue chain is Flagellar assembly factor FliW (128 aa).

The protein belongs to the FliW family. In terms of assembly, interacts with translational regulator CsrA and flagellin(s).

The protein localises to the cytoplasm. Acts as an anti-CsrA protein, binds CsrA and prevents it from repressing translation of its target genes, one of which is flagellin. Binds to flagellin and participates in the assembly of the flagellum. This chain is Flagellar assembly factor FliW, found in Campylobacter fetus subsp. fetus (strain 82-40).